A 147-amino-acid polypeptide reads, in one-letter code: Large ribosomal subunit protein uL13 (147 aa).

It belongs to the universal ribosomal protein uL13 family. Part of the 50S ribosomal subunit.

Its function is as follows. This protein is one of the early assembly proteins of the 50S ribosomal subunit, although it is not seen to bind rRNA by itself. It is important during the early stages of 50S assembly. This chain is Large ribosomal subunit protein uL13, found in Streptomyces avermitilis (strain ATCC 31267 / DSM 46492 / JCM 5070 / NBRC 14893 / NCIMB 12804 / NRRL 8165 / MA-4680).